The following is a 234-amino-acid chain: Opacity protein opA55 (234 aa).

A signal peptide is located at residue alanine 1.

Belongs to the opacity porin family.

Its subcellular location is the cell outer membrane. In terms of biological role, implicated in a number of adherence functions. OPA proteins are implicated in pathogenesis and are subject to phase variation. This is Opacity protein opA55 (opaE) from Neisseria gonorrhoeae.